Consider the following 547-residue polypeptide: Chaperonin GroEL (547 aa).

ATP contacts are provided by residues 30-33, lysine 51, 87-91, glycine 415, 479-481, and aspartate 495; these read TLGP, DGTTT, and NAA.

The protein belongs to the chaperonin (HSP60) family. Forms a cylinder of 14 subunits composed of two heptameric rings stacked back-to-back. Interacts with the co-chaperonin GroES.

Its subcellular location is the cytoplasm. The enzyme catalyses ATP + H2O + a folded polypeptide = ADP + phosphate + an unfolded polypeptide.. Its function is as follows. Together with its co-chaperonin GroES, plays an essential role in assisting protein folding. The GroEL-GroES system forms a nano-cage that allows encapsulation of the non-native substrate proteins and provides a physical environment optimized to promote and accelerate protein folding. This Acinetobacter baumannii (strain ACICU) protein is Chaperonin GroEL.